Consider the following 147-residue polypeptide: Flagellar assembly factor FliW (147 aa).

This sequence belongs to the FliW family. As to quaternary structure, interacts with translational regulator CsrA and flagellin(s).

It is found in the cytoplasm. Functionally, acts as an anti-CsrA protein, binds CsrA and prevents it from repressing translation of its target genes, one of which is flagellin. Binds to flagellin and participates in the assembly of the flagellum. The protein is Flagellar assembly factor FliW of Treponema denticola (strain ATCC 35405 / DSM 14222 / CIP 103919 / JCM 8153 / KCTC 15104).